The following is a 59-amino-acid chain: Protein B3 (59 aa).

The protein is Protein B3 (B3) of Homo sapiens (Human).